The following is a 458-amino-acid chain: Ammonium transporter Rh type B (458 aa).

Over 1-13 the chain is Cytoplasmic; that stretch reads MAGSPSRAAGRRL. A helical transmembrane segment spans residues 14 to 34; the sequence is QLPLLCLFLQGATAVLFAVFV. The Extracellular portion of the chain corresponds to 35–61; it reads RYNHKTDAALWHRGNHSNADNEFYFRY. Asn49 carries an N-linked (GlcNAc...) asparagine glycan. Residues 62–82 traverse the membrane as a helical segment; that stretch reads PSFQDVHAMVFVGFGFLMVFL. At 83 to 86 the chain is on the cytoplasmic side; sequence QRYG. A helical transmembrane segment spans residues 87 to 107; the sequence is FSSVGFTFLLAAFALQWSTLV. Topologically, residues 108-124 are extracellular; it reads QGFLHSFHSGHIHVGVE. Residues 125–145 form a helical membrane-spanning segment; that stretch reads SMINADFCAGAVLISFGAVLG. Residues 146-149 are Cytoplasmic-facing; sequence KTGP. The chain crosses the membrane as a helical span at residues 150–170; it reads AQLLLMALLEVVLFGINEFVL. The Extracellular segment spans residues 171–178; sequence LHLLGVRD. The chain crosses the membrane as a helical span at residues 179-201; that stretch reads AGGSMTIHTFGAYFGLVLSRVLY. The Cytoplasmic segment spans residues 202 to 219; that stretch reads RPQLEKSKHRQGSVYHSD. A helical membrane pass occupies residues 220 to 240; it reads LFAMIGTIFLWIFWPSFNSAL. Over 241-251 the chain is Extracellular; that stretch reads TALGAGQHRTA. Residues 252–272 traverse the membrane as a helical segment; it reads LNTYYSLAASTLGTFALSALV. The Cytoplasmic portion of the chain corresponds to 273-282; it reads GEDGRLDMVH. A helical membrane pass occupies residues 283–303; sequence IQNAALAGGVVVGTSSEMMLT. A topological domain (extracellular) is located at residue Pro304. Residues 305–325 form a helical membrane-spanning segment; the sequence is FGALAAGFLAGTVSTLGYKFF. Residues 326 to 346 lie on the Cytoplasmic side of the membrane; the sequence is TPILESKFKVQDTCGVHNLHG. Residues 347-367 traverse the membrane as a helical segment; it reads MPGVLGALLGVLVAGLATHEA. Residues 368 to 393 lie on the Extracellular side of the membrane; it reads YGDGLESVFPLIAEGQRSATSQAMLQ. The chain crosses the membrane as a helical span at residues 394-414; sequence LFGLFVTLMFASVGGGLGGLL. The Cytoplasmic portion of the chain corresponds to 415 to 458; sequence LKLPFLDSPPDSQCYEDQVHWQVPGEHEDEAQRPLRVEEADTQA. The tract at residues 416–424 is interaction with ANK3; the sequence is KLPFLDSPP. The short motif at 429 to 432 is the Basolateral sorting signal element; it reads YEDQ. Residues 439-458 are disordered; that stretch reads GEHEDEAQRPLRVEEADTQA. A compositionally biased stretch (basic and acidic residues) spans 444–458; sequence EAQRPLRVEEADTQA.

It belongs to the ammonium transporter (TC 2.A.49) family. Rh subfamily. As to quaternary structure, interacts (via C-terminus) with ANK2 and ANK3; required for targeting to the basolateral membrane. In terms of processing, N-glycosylated.

The protein localises to the cell membrane. The protein resides in the basolateral cell membrane. The catalysed reaction is NH4(+)(in) = NH4(+)(out). It catalyses the reaction methylamine(out) = methylamine(in). The enzyme catalyses CO2(out) = CO2(in). Its function is as follows. Ammonium transporter involved in the maintenance of acid-base homeostasis. Transports ammonium and its related derivative methylammonium across the basolateral plasma membrane of epithelial cells likely contributing to renal transepithelial ammonia transport and ammonia metabolism. May transport either NH4(+) or NH3 ammonia species predominantly mediating an electrogenic NH4(+) transport. May act as a CO2 channel providing for renal acid secretion. The chain is Ammonium transporter Rh type B (RHBG) from Macaca mulatta (Rhesus macaque).